The sequence spans 251 residues: NADPH-dependent oxidoreductase (251 aa).

Belongs to the flavin oxidoreductase frp family. The cofactor is FMN.

Reduces FMN, organic nitro compounds and disulfide DTNB. Involved in maintenance of the cellular redox state and the disulfide stress response. The sequence is that of NADPH-dependent oxidoreductase (nfrA) from Staphylococcus epidermidis (strain ATCC 12228 / FDA PCI 1200).